Consider the following 320-residue polypeptide: ATP synthase gamma chain (320 aa).

It belongs to the ATPase gamma chain family. In terms of assembly, F-type ATPases have 2 components, CF(1) - the catalytic core - and CF(0) - the membrane proton channel. CF(1) has five subunits: alpha(3), beta(3), gamma(1), delta(1), epsilon(1). CF(0) has three main subunits: a, b and c.

It localises to the cell membrane. In terms of biological role, produces ATP from ADP in the presence of a proton gradient across the membrane. The gamma chain is believed to be important in regulating ATPase activity and the flow of protons through the CF(0) complex. The protein is ATP synthase gamma chain of Lactobacillus delbrueckii subsp. bulgaricus (strain ATCC 11842 / DSM 20081 / BCRC 10696 / JCM 1002 / NBRC 13953 / NCIMB 11778 / NCTC 12712 / WDCM 00102 / Lb 14).